Here is a 400-residue protein sequence, read N- to C-terminus: Probable transposase for insertion sequence element ISRM3-like (400 aa).

This sequence belongs to the transposase mutator family.

Functionally, required for the transposition of the insertion element. The polypeptide is Probable transposase for insertion sequence element ISRM3-like (Sinorhizobium fredii (strain NBRC 101917 / NGR234)).